Reading from the N-terminus, the 141-residue chain is Large ribosomal subunit protein uL11 (141 aa).

The protein belongs to the universal ribosomal protein uL11 family. As to quaternary structure, part of the ribosomal stalk of the 50S ribosomal subunit. Interacts with L10 and the large rRNA to form the base of the stalk. L10 forms an elongated spine to which L12 dimers bind in a sequential fashion forming a multimeric L10(L12)X complex. In terms of processing, one or more lysine residues are methylated.

In terms of biological role, forms part of the ribosomal stalk which helps the ribosome interact with GTP-bound translation factors. This Chlamydia pneumoniae (Chlamydophila pneumoniae) protein is Large ribosomal subunit protein uL11.